A 486-amino-acid chain; its full sequence is Serine/threonine-protein kinase 4 (486 aa).

The region spanning Phe-29–Val-280 is the Protein kinase domain. Residues Leu-35–Val-43 and Lys-58 each bind ATP. Residue Asp-148 is the Proton acceptor of the active site. Thr-182 carries the post-translational modification Phosphothreonine; by autocatalysis. A coiled-coil region spans residues Ile-288–Thr-324. Residues Glu-305–Ala-332 are disordered. Residues Asp-312–Asp-325 are compositionally biased toward acidic residues. The region spanning Tyr-432 to Lys-479 is the SARAH domain.

This sequence belongs to the protein kinase superfamily. STE Ser/Thr protein kinase family. STE20 subfamily. Homodimer; mediated via the coiled-coil region. It depends on Mg(2+) as a cofactor. Post-translationally, proteolytically cleaved by caspase-3 during apoptosis at Asp-325 resulting in a 37 kDa form. Proteolytic cleavage results in kinase activation and nuclear translocation of the truncated form (MST1/N).

It is found in the cytoplasm. The protein resides in the nucleus. It carries out the reaction L-seryl-[protein] + ATP = O-phospho-L-seryl-[protein] + ADP + H(+). The catalysed reaction is L-threonyl-[protein] + ATP = O-phospho-L-threonyl-[protein] + ADP + H(+). The C-terminal non-catalytic region inhibits the kinase activity, the enzyme is activated by caspase-cleavage. Homodimerization and autophosphorylation of Thr-182 is also required for full activation. Functionally, stress-activated, pro-apoptotic kinase which, following caspase-cleavage, enters the nucleus and induces chromatin condensation followed by internucleosomal DNA fragmentation. Key component of the Hippo signaling pathway which plays a pivotal role in organ size control and tumor suppression by restricting proliferation and promoting apoptosis. The core of this pathway is composed of a kinase cascade wherein STK3/MST2 and STK4/MST1, in complex with its regulatory protein SAV1, phosphorylates and activates LATS1/2 in complex with its regulatory protein MOB1, which in turn phosphorylates and inactivates YAP1 oncoprotein and WWTR1/TAZ. Phosphorylation of YAP1 by LATS2 inhibits its translocation into the nucleus to regulate cellular genes important for cell proliferation, cell death, and cell migration. Phosphorylates 'Ser-14' of histone H2B (H2BS14ph) during apoptosis. Phosphorylates FOXO3 upon oxidative stress, which results in its nuclear translocation and cell death initiation. In Gallus gallus (Chicken), this protein is Serine/threonine-protein kinase 4 (STK4).